The primary structure comprises 1014 residues: Klotho (1014 aa).

Positions 1–35 (MPASAPPRRPRPPPPSLSLSLLLVLLGLAGRRLRA) are cleaved as a signal peptide. Residues 36–983 (EPGDGAQTWA…ECSFFHTRKP (948 aa)) lie on the Extracellular side of the membrane. Glycosyl hydrolase-1 regions lie at residues 59 to 508 (FQGT…KNGF) and 517 to 955 (LEGT…SNGF). Residues Asn-161, Asn-285, Asn-346, Asn-609, Asn-614, and Asn-696 are each glycosylated (N-linked (GlcNAc...) asparagine). Residues 984–1004 (LVAFIAFLFFAFIVSLSLIFY) traverse the membrane as a helical segment. Topologically, residues 1005-1014 (YSKKGRRRYQ) are cytoplasmic.

This sequence belongs to the glycosyl hydrolase 1 family. Klotho subfamily. Homodimer. Interacts with FGF23 and FGFR1.

It is found in the cell membrane. It localises to the apical cell membrane. The protein resides in the secreted. The catalysed reaction is a beta-D-glucuronoside + H2O = D-glucuronate + an alcohol. In terms of biological role, may have weak glycosidase activity towards glucuronylated steroids. However, it lacks essential active site Glu residues at positions 241 and 874, suggesting it may be inactive as a glycosidase in vivo. May be involved in the regulation of calcium and phosphorus homeostasis by inhibiting the synthesis of active vitamin D. Essential factor for the specific interaction between FGF23 and FGFR1. Functionally, the Klotho peptide generated by cleavage of the membrane-bound isoform may be an anti-aging circulating hormone which would extend life span by inhibiting insulin/IGF1 signaling. This chain is Klotho (KL), found in Macaca fascicularis (Crab-eating macaque).